A 502-amino-acid chain; its full sequence is Smr domain-containing protein C1235.03 (502 aa).

Residues 150-184 (LITSNIGHRSRQRKKKTKKATNSRKPLSKFQSNTE) are disordered. Positions 157-171 (HRSRQRKKKTKKATN) are enriched in basic residues. The Smr domain occupies 411 to 459 (SLDLHGATVREAKTIVRERVAAWWAKEADTSPNSIRPFVIVTGRGNHSI).

Its subcellular location is the nucleus. It localises to the nucleolus. In Schizosaccharomyces pombe (strain 972 / ATCC 24843) (Fission yeast), this protein is Smr domain-containing protein C1235.03.